Here is a 470-residue protein sequence, read N- to C-terminus: Shutoff alkaline exonuclease (470 aa).

Belongs to the herpesviridae alkaline nuclease family. Forms a complex with the DNA polymerase, the DNA polymerase processivity factor, and the major DNA binding protein.

It is found in the host nucleus. The protein resides in the host cytoplasm. Functionally, plays a role in processing non linear or branched viral DNA intermediates in order to promote the production of mature packaged unit-length linear progeny viral DNA molecules. Exhibits endonuclease and exonuclease activities and accepts both double-stranded and single-stranded DNA as substrate. Exonuclease digestion of DNA is in the 5'-&gt; 3' direction and the products are 5'-monophosphate nucleosides. Additionally, forms a recombinase with the major DNA-binding protein, which displays strand exchange activity. Also acts as a cytoplasmic RNA endonuclease that induces degradation of the majority of the cellular messenger RNAs during early lytic infection. The resulting inhibition of cellular protein synthesis serves to ensure maximal viral gene expression and evasion from host immune response. Internally cleaves host mRNAs which are then degraded by the cellular exonuclease XRN1. Bypasses therefore the regulatory steps of deadenylation and decapping normally required for XRN1 activation. The chain is Shutoff alkaline exonuclease from Epstein-Barr virus (strain GD1) (HHV-4).